Reading from the N-terminus, the 167-residue chain is Translation initiation factor IF-3 (167 aa).

It belongs to the IF-3 family. In terms of assembly, monomer.

Its subcellular location is the cytoplasm. In terms of biological role, IF-3 binds to the 30S ribosomal subunit and shifts the equilibrium between 70S ribosomes and their 50S and 30S subunits in favor of the free subunits, thus enhancing the availability of 30S subunits on which protein synthesis initiation begins. The protein is Translation initiation factor IF-3 of Bacillus anthracis.